The following is a 689-amino-acid chain: Glycine--tRNA ligase beta subunit (689 aa).

The protein belongs to the class-II aminoacyl-tRNA synthetase family. As to quaternary structure, tetramer of two alpha and two beta subunits.

The protein resides in the cytoplasm. The enzyme catalyses tRNA(Gly) + glycine + ATP = glycyl-tRNA(Gly) + AMP + diphosphate. The polypeptide is Glycine--tRNA ligase beta subunit (Desulforapulum autotrophicum (strain ATCC 43914 / DSM 3382 / VKM B-1955 / HRM2) (Desulfobacterium autotrophicum)).